We begin with the raw amino-acid sequence, 425 residues long: E3 ubiquitin-protein ligase CBLL2 (425 aa).

The segment at 57-97 (CDKCDLPIKIYGRIIPCKHAFCYHCANLYDKVGYKVCPRCR) adopts an RING-type zinc-finger fold. An HYB domain region spans residues 96–154 (CRYPVLRIEAHKRGSVFMCSIVQQCKRTYLSQKSLQAHIKRRHKRARKQVTSASLEKVR). A C2H2-type zinc finger spans residues 112-138 (FMCSIVQQCKRTYLSQKSLQAHIKRRH). 2 disordered regions span residues 241-297 (DHIQ…HQMP) and 382-425 (TDAM…HRRY). Residues 398 to 408 (PCPPTRSPPPS) show a composition bias toward pro residues. A compositionally biased stretch (basic residues) spans 412–425 (GRSHHSHQRRHRRY).

Homodimer. In terms of tissue distribution, exclusively expressed in testis and sperm, including spermatocytes, round and elongated spermatids, and Leydig cells.

It localises to the cytoplasm. The catalysed reaction is S-ubiquitinyl-[E2 ubiquitin-conjugating enzyme]-L-cysteine + [acceptor protein]-L-lysine = [E2 ubiquitin-conjugating enzyme]-L-cysteine + N(6)-ubiquitinyl-[acceptor protein]-L-lysine.. Its pathway is protein modification; protein ubiquitination. Its function is as follows. E3 ubiquitin ligase catalyzing the covalent attachment of ubiquitin moieties onto substrate proteins. May operate on tyrosine-phosphorylated SRC substrates. This chain is E3 ubiquitin-protein ligase CBLL2, found in Homo sapiens (Human).